The sequence spans 437 residues: Chaperone SurA (437 aa).

An N-terminal signal peptide occupies residues 1 to 27; the sequence is MHNHVFKTIARHGLIALFFFFSISAMA. PpiC domains are found at residues 179 to 280 and 290 to 388; these read QDEF…KLLN and VDQT…QVLE.

Its subcellular location is the periplasm. It carries out the reaction [protein]-peptidylproline (omega=180) = [protein]-peptidylproline (omega=0). Its function is as follows. Chaperone involved in the correct folding and assembly of outer membrane proteins. Recognizes specific patterns of aromatic residues and the orientation of their side chains, which are found more frequently in integral outer membrane proteins. May act in both early periplasmic and late outer membrane-associated steps of protein maturation. This is Chaperone SurA from Methylobacillus flagellatus (strain ATCC 51484 / DSM 6875 / VKM B-1610 / KT).